The chain runs to 537 residues: Eukaryotic translation initiation factor 3 subunit L (537 aa).

The segment covering 1–19 has biased composition (basic and acidic residues); it reads MSRRVEFDMSHEDHTDRRR. The tract at residues 1–28 is disordered; it reads MSRRVEFDMSHEDHTDRRRTNTFSSEED. In terms of domain architecture, PCI spans 297 to 485; it reads EATKMFVNCL…GPSTVDDDEP (189 aa).

This sequence belongs to the eIF-3 subunit L family. Component of the eukaryotic translation initiation factor 3 (eIF-3) complex.

It is found in the cytoplasm. Its function is as follows. Component of the eukaryotic translation initiation factor 3 (eIF-3) complex, which is involved in protein synthesis of a specialized repertoire of mRNAs and, together with other initiation factors, stimulates binding of mRNA and methionyl-tRNAi to the 40S ribosome. The eIF-3 complex specifically targets and initiates translation of a subset of mRNAs involved in cell proliferation. In Caenorhabditis briggsae, this protein is Eukaryotic translation initiation factor 3 subunit L.